Consider the following 461-residue polypeptide: Photosystem II CP43 reaction center protein (461 aa).

Residues 1-2 (ME) constitute a propeptide that is removed on maturation. Residue Thr-3 is modified to N-acetylthreonine. Position 3 is a phosphothreonine (Thr-3). Transmembrane regions (helical) follow at residues 57-81 (LFEV…PHLA), 122-143 (LLGP…KDRN), 166-188 (KALY…RKIS), 243-263 (KPFA…LSYS), and 279-300 (WFNN…ASQA). Residue Glu-355 coordinates [CaMn4O5] cluster. A helical membrane pass occupies residues 435-459 (RARAAAAGFEKGIDRDFEPVLSMTP).

The protein belongs to the PsbB/PsbC family. PsbC subfamily. As to quaternary structure, PSII is composed of 1 copy each of membrane proteins PsbA, PsbB, PsbC, PsbD, PsbE, PsbF, PsbH, PsbI, PsbJ, PsbK, PsbL, PsbM, PsbT, PsbX, PsbY, PsbZ, Psb30/Ycf12, at least 3 peripheral proteins of the oxygen-evolving complex and a large number of cofactors. It forms dimeric complexes. It depends on Binds multiple chlorophylls and provides some of the ligands for the Ca-4Mn-5O cluster of the oxygen-evolving complex. It may also provide a ligand for a Cl- that is required for oxygen evolution. PSII binds additional chlorophylls, carotenoids and specific lipids. as a cofactor.

It localises to the plastid. Its subcellular location is the chloroplast thylakoid membrane. Its function is as follows. One of the components of the core complex of photosystem II (PSII). It binds chlorophyll and helps catalyze the primary light-induced photochemical processes of PSII. PSII is a light-driven water:plastoquinone oxidoreductase, using light energy to abstract electrons from H(2)O, generating O(2) and a proton gradient subsequently used for ATP formation. In Trachelium caeruleum (Blue throatwort), this protein is Photosystem II CP43 reaction center protein.